The chain runs to 316 residues: Bifunctional peptidase and (3S)-lysyl hydroxylase Jmjd7 (316 aa).

The JmjC domain occupies 128-307 (VQKQCSNLPT…LKYSYFQLMD (180 aa)). Residues H178, D180, and H277 each contribute to the Fe cation site.

Homodimer; disulfide-linked. Interacts with DRG1 and DRG2. Fe(2+) is required as a cofactor.

It is found in the nucleus. The protein resides in the cytoplasm. It carries out the reaction L-lysyl-[protein] + 2-oxoglutarate + O2 = (3S)-3-hydroxy-L-lysyl-[protein] + succinate + CO2. Bifunctional enzyme that acts both as an endopeptidase and 2-oxoglutarate-dependent monooxygenase. Endopeptidase that cleaves histones N-terminal tails at the carboxyl side of methylated arginine or lysine residues, to generate 'tailless nucleosomes', which may trigger transcription elongation. Preferentially recognizes and cleaves monomethylated and dimethylated arginine residues of histones H2, H3 and H4. After initial cleavage, continues to digest histones tails via its aminopeptidase activity. Additionally, may play a role in protein biosynthesis by modifying the translation machinery. Acts as a Fe(2+) and 2-oxoglutarate-dependent monooxygenase, catalyzing (S)-stereospecific hydroxylation at C-3 of 'Lys-22' of DRG1 and 'Lys-21' of DRG2 translation factors (TRAFAC), promoting their interaction with ribonucleic acids (RNA). The polypeptide is Bifunctional peptidase and (3S)-lysyl hydroxylase Jmjd7 (Mus musculus (Mouse)).